A 481-amino-acid chain; its full sequence is ATP synthase subunit beta, plastid (481 aa).

An ATP-binding site is contributed by 162–169 (GGAGVGKT).

It belongs to the ATPase alpha/beta chains family. F-type ATPases have 2 components, CF(1) - the catalytic core - and CF(0) - the membrane proton channel. CF(1) has five subunits: alpha(3), beta(3), gamma(1), delta(1), epsilon(1). CF(0) has four main subunits: a(1), b(1), b'(1) and c(9-12).

Its subcellular location is the plastid membrane. The catalysed reaction is ATP + H2O + 4 H(+)(in) = ADP + phosphate + 5 H(+)(out). In terms of biological role, produces ATP from ADP in the presence of a proton gradient across the membrane. The catalytic sites are hosted primarily by the beta subunits. The protein is ATP synthase subunit beta, plastid (atpB) of Prototheca wickerhamii.